Here is an 879-residue protein sequence, read N- to C-terminus: Protein translocase subunit SecA (879 aa).

ATP-binding positions include Gln87, 105–109, and Asp509; that span reads GEGKT. Positions 834–879 are disordered; sequence IAEDSEKLKPITGTKKPKRNDPCPCGSGKKYKNCCGQSGPKKGLLA. Zn(2+) is bound by residues Cys856, Cys858, Cys867, and Cys868.

The protein belongs to the SecA family. Monomer and homodimer. Part of the essential Sec protein translocation apparatus which comprises SecA, SecYEG and auxiliary proteins SecDF-YajC and YidC. It depends on Zn(2+) as a cofactor.

The protein resides in the cell inner membrane. It localises to the cytoplasm. It carries out the reaction ATP + H2O + cellular proteinSide 1 = ADP + phosphate + cellular proteinSide 2.. Part of the Sec protein translocase complex. Interacts with the SecYEG preprotein conducting channel. Has a central role in coupling the hydrolysis of ATP to the transfer of proteins into and across the cell membrane, serving as an ATP-driven molecular motor driving the stepwise translocation of polypeptide chains across the membrane. This chain is Protein translocase subunit SecA, found in Sulfurovum sp. (strain NBC37-1).